Consider the following 2178-residue polypeptide: Streptococcal hemagglutinin (2178 aa).

Residues 1–90 form the signal peptide; it reads MFFKRQKGQY…AVVTSSSVYA (90 aa). The non-repeat region 1 (NR1) stretch occupies residues 91-137; the sequence is EEEQALEKVIDTRDVLATRGEAVLSEEAATTLSSEGANPVESLSDTL. The segment at 138–219 is ser-rich region 1 (SR1); it reads SASESASANS…SLISSDSSNS (82 aa). Low complexity predominate over residues 192–244; that stretch reads TSQSFSSTTSSTQSSNNESLISSDSSNSLNTNQSVSARNQNARVRTRRAVAAN. Disordered stretches follow at residues 192-246, 495-557, 584-653, 836-857, 884-917, 944-993, 1020-1289, 1341-1390, 1488-1685, 1725-1901, and 2119-2151; these read TSQS…ANDT, VSAS…SVSA, SAST…SVSA, SASTSASVSASESASTSASVSA, SASTSASVSASESASTSASVSASESASTSASVSA, SAST…SESA, SASV…SVSA, ASTS…ESAS, ASTS…SAST, and LSQSLSDSQSTSATQSMHDRISKGQLPRTGESE. The segment at 220 to 449 is non-repeat region 2 (NR2); that stretch reads LNTNQSVSAR…ANRVVKDLQI (230 aa). The interval 450–2143 is ser-rich region 2 (SR2); that stretch reads SKSNSASQSS…SMHDRISKGQ (1694 aa). Low complexity predominate over residues 2119-2130; it reads LSQSLSDSQSTS. The short motif at 2144 to 2148 is the LPXTG sorting signal element; sequence LPRTG. Thr-2147 carries the post-translational modification Pentaglycyl murein peptidoglycan amidated threonine. The propeptide at 2148–2178 is removed by sortase; sequence GESESKASILALGIGALGLAFKKRKKNESED.

This sequence belongs to the serine-rich repeat protein (SRRP) family. Post-translationally, the protein is glycosylated in vivo; constructs without SR1 and SR2 are not glycosylated.

Its subcellular location is the secreted. The protein localises to the cell wall. Functionally, a cell wall protein involved with PadA in host cell interactions required for colonization and pathogensis. Mediates hemagglutination and adherence to ghst glycoproteins. Recognizes fetuin-A (AHSG), a highly glycosylated human plasma protein, also involved in recognition of human platelets, probably via platelet glycoprotein Ib alpha (GP1BA). Acts in concert with PadA to promote binding to glycosylated human fibronectin (FN1) and vitronectin (VTN), and biofilm formation. Plays a major role in fibronectin and vitronectin binding; binding is mediated by glycosylated regions. Probably mediates interaction of PadA with resting platelets. The sequence is that of Streptococcal hemagglutinin from Streptococcus gordonii (strain Challis / ATCC 35105 / BCRC 15272 / CH1 / DL1 / V288).